Consider the following 631-residue polypeptide: Acurin A biosynthesis cluster transcription regulator (631 aa).

Over residues 1-11 (MSPNMSLTASH) the composition is skewed to polar residues. The segment at 1-28 (MSPNMSLTASHPQQPQPTPQSKAQLTRQ) is disordered. The segment at residues 30-62 (CNRCHASKLKCLRPPGVTTSKSCIRCIKADTEC) is a DNA-binding region (zn(2)-C6 fungal-type). Disordered stretches follow at residues 64–141 (YDPP…PDNR), 489–522 (CSSSASTSSTASTTSCSTRAPPSSATGGAHHPAT), and 536–573 (HSSSDHLFSQPEGRGYAPYNHAFHPPPPSRHTHNYPTP). The span at 88 to 99 (IEAREPEVTDPR) shows a compositional bias: basic and acidic residues. A compositionally biased stretch (polar residues) spans 119 to 128 (NGSLAPSSAA).

The protein localises to the nucleus. Functionally, transcription factor that positively regulates the expression of the cluster that mediates the biosynthesis of acurin A, a highly reduced polyketide coupled to a serine via a peptide bond. This chain is Acurin A biosynthesis cluster transcription regulator, found in Aspergillus aculeatus (strain ATCC 16872 / CBS 172.66 / WB 5094).